Consider the following 148-residue polypeptide: UPF0756 membrane protein YeaL (148 aa).

4 consecutive transmembrane segments (helical) span residues 14–34, 51–71, 86–106, and 121–141; these read ALGF…LIIV, LSIG…SGTL, LVAI…VTLM, and VLGV…AGLV.

The protein belongs to the UPF0756 family.

It is found in the cell membrane. The sequence is that of UPF0756 membrane protein YeaL from Shigella boydii serotype 18 (strain CDC 3083-94 / BS512).